The sequence spans 89 residues: Small ribosomal subunit protein bS20 (89 aa).

Belongs to the bacterial ribosomal protein bS20 family.

Functionally, binds directly to 16S ribosomal RNA. The protein is Small ribosomal subunit protein bS20 of Phenylobacterium zucineum (strain HLK1).